The chain runs to 151 residues: Ribonuclease H (151 aa).

Residues 1 to 141 (MKHVDIFTDG…ADELARRGME (141 aa)) enclose the RNase H type-1 domain. Residues aspartate 9, glutamate 47, aspartate 69, and aspartate 133 each contribute to the Mg(2+) site.

It belongs to the RNase H family. As to quaternary structure, monomer. It depends on Mg(2+) as a cofactor.

The protein resides in the cytoplasm. The catalysed reaction is Endonucleolytic cleavage to 5'-phosphomonoester.. Endonuclease that specifically degrades the RNA of RNA-DNA hybrids. This is Ribonuclease H from Rhizobium etli (strain ATCC 51251 / DSM 11541 / JCM 21823 / NBRC 15573 / CFN 42).